We begin with the raw amino-acid sequence, 649 residues long: Endoglucanase D (649 aa).

Residues 1–41 form the signal peptide; the sequence is MSRMTLKSSMKKRVLSLLIAVVFLSLTGVFPSGLIETKVSA. Residue D201 is the Nucleophile of the active site. Residues H516 and D546 contribute to the active site. Residue E555 is the Proton donor of the active site. The Dockerin domain maps to 579–649; sequence NEVLYGDVND…LIRVIEKLPI (71 aa).

The protein belongs to the glycosyl hydrolase 9 (cellulase E) family. The cofactor is Ca(2+).

The catalysed reaction is Endohydrolysis of (1-&gt;4)-beta-D-glucosidic linkages in cellulose, lichenin and cereal beta-D-glucans.. In terms of biological role, this enzyme catalyzes the endohydrolysis of 1,4-beta-glucosidic linkages in cellulose, lichenin and cereal beta-D-glucans. This Acetivibrio thermocellus (strain ATCC 27405 / DSM 1237 / JCM 9322 / NBRC 103400 / NCIMB 10682 / NRRL B-4536 / VPI 7372) (Clostridium thermocellum) protein is Endoglucanase D (celD).